A 3011-amino-acid polypeptide reads, in one-letter code: MSTNPKPQKKNKRNTNRRPQDVKFPGGGQIVGGVYLLPRRGPRLGVRATRKTSERSQPRGRRQPIPKARRPEGRTWAQPGYPWPLYGNEGCGWAGWLLSPRGSRPSWGPTDPRRRSRNLGKVIDTLTCGFADLMGYIPLVGAPLGGAARALAHGVRVLEDGVNYATGNLPGCSFSIFLLALLSCLTVPASAYQVRNSTGLYHVTNDCPNSSIVYEAADAILHTPGCVPCVREGNASRCWVAMTPTVATRDGKLPATQLRRHIDLLVGSATLCSALYVGDLCGSVFLVGQLFTFSPRRHWTTQGCNCSIYPGHITGHRMAWDMMMNWSPTTALVMAQLLRIPQAILDMIAGAHWGVLAGIAYFSMVGNWAKVLVVLLLFAGVDAETHVTGGSAGHTVSGFVSLLAPGAKQNVQLINTNGSWHLNSTALNCNDSLNTGWLAGLFYHHKFNSSGCPERLASCRPLTDFDQGWGPISYANGSGPDQRPYCWHYPPKPCGIVPAKSVCGPVYCFTPSPVVVGTTDRSGAPTYSWGENDTDVFVLNNTRPPLGNWFGCTWMNSTGFTKVCGAPPCVIGGAGNNTLHCPTDCFRKHPDATYSRCGSGPWITPRCLVDYPYRLWHYPCTINYTIFKIRMYVGGVEHRLEAACNWTRGERCDLEDRDRSELSPLLLTTTQWQVLPCSFTTLPALSTGLIHLHQNIVDVQYLYGVGSSIASWAIKWEYVVLLFLLLADARVCSCLWMMLLISQAEAALENLVILNAASLAGTHGLVSFLVFFCFAWYLKGKWVPGAVYTFYGMWPLLLLLLALPQRAYALDTEVAASCGGVVLVGLMALTLSPYYKRYISWCLWWLQYFLTRVEAQLHVWIPPLNVRGGRDAVILLMCAVHPTLVFDITKLLLAVFGPLWILQASLLKVPYFVRVQGLLRFCALARKMIGGHYVQMVIIKLGALTGTYVYNHLTPLRDWAHNGLRDLAVAVEPVVFSQMETKLITWGADTAACGDIINGLPVSARRGREILLGPADGMVSKGWRLLAPITAYAQQTRGLLGCIITSLTGRDKNQVEGEVQIVSTAAQTFLATCINGVCWTVYHGAGTRTIASPKGPVIQMYTNVDQDLVGWPAPQGSRSLTPCTCGSSDLYLVTRHADVIPVRRRGDSRGSLLSPRPISYLKGSSGGPLLCPAGHAVGIFRAAVCTRGVAKAVDFIPVENLETTMRSPVFTDNSSPPVVPQSFQVAHLHAPTGSGKSTKVPAAYAAQGYKVLVLNPSVAATLGFGAYMSKAHGIDPNIRTGVRTITTGSPITYSTYGKFLADGGCSGGAYDIIICDECHSTDATSILGIGTVLDQAETAGARLVVLATATPPGSVTVPHPNIEEVALSTTGEIPFYGKAIPLEVIKGGRHLIFCHSKKKCDELAAKLVALGINAVAYYRGLDVSVIPTSGDVVVVATDALMTGYTGDFDSVIDCNTCVTQTVDFSLDPTFTIETITLPQDAVSRTQRRGRTGRGKPGIYRFVAPGERPSGMFDSSVLCECYDAGCAWYELTPAETTVRLRAYMNTPGLPVCQDHLEFWEGVFTGLTHIDAHFLSQTKQSGENLPYLVAYQATVCARAQAPPPSWDQMWKCLIRLKPTLHGPTPLLYRLGAVQNEITLTHPVTKYIMTCMSADLEVVTSTWVLVGGVLAALAAYCLSTGCVVIVGRVVLSGKPAIIPDREVLYREFDEMEECSQHLPYIEQGMMLAEQFKQKALGLLQTASRQAEVIAPAVQTNWQKLETFWAKHMWNFISGIQYLAGLSTLPGNPAIASLMAFTAAVTSPLTTSQTLLFNILGGWVAAQLAAPGAATAFVGAGLAGAAIGSVGLGKVLIDILAGYGAGVAGALVAFKIMSGEVPSTEDLVNLLPAILSPGALVVGVVCAAILRRHVGPGEGAVQWMNRLIAFASRGNHVSPTHYVPESDAAARVTAILSSLTVTQLLRRLHQWISSECTTPCSGSWLRDIWDWICEVLSDFKTWLKAKLMPQLPGIPFVSCQRGYKGVWRVDGIMHTRCHCGAEITGHVKNGTMRIVGPRTCRNMWSGTFPINAYTTGPCTPLPAPNYTFALWRVSAEEYVEIRQVGDFHYVTGMTTDNLKCPCQVPSPEFFTELDGVRLHRFAPPCKPLLREEVSFRVGLHEYPVGSQLPCEPEPDVAVLTSMLTDPSHITAEAAGRRLARGSPPSVASSSASQLSAPSLKATCTANHDSPDAELIEANLLWRQEMGGNITRVESENKVVILDSFDPLVAEEDEREISVPAEILRKSRRFAQALPVWARPDYNPPLVETWKKPDYEPPVVHGCPLPPPKSPPVPPPRKKRTVVLTESTLSTALAELATRSFGSSSTSGITGDNTTTSSEPAPSGCPPDSDAESYSSMPPLEGEPGDPDLSDGSWSTVSSEANAEDVVCCSMSYSWTGALVTPCAAEEQKLPINALSNSLLRHHNLVYSTTSRSACQRQKKVTFDRLQVLDSHYQDVLKEVKAAASKVKANLLSVEEACSLTPPHSAKSKFGYGAKDVRCHARKAVTHINSVWKDLLEDNVTPIDTTIMAKNEVFCVQPEKGGRKPARLIVFPDLGVRVCEKMALYDVVTKLPLAVMGSSYGFQYSPGQRVEFLVQAWKSKKTPMGFSYDTRCFDSTVTESDIRTEEAIYQCCDLDPQARVAIKSLTERLYVGGPLTNSRGENCGYRRCRASGVLTTSCGNTLTCYIKARAACRAAGLQDCTMLVCGDDLVVICESAGVQEDAASLRAFTEAMTRYSAPPGDPPQPEYDLELITSCSSNVSVAHDGAGKRVYYLTRDPTTPLARAAWETARHTPVNSWLGNIIMFAPTLWARMILMTHFFSVLIARDQLEQALDCEIYGACYSIEPLDLPPIIQRLHGLSAFSLHSYSPGEINRVAACLRKLGVPPLRAWRHRARSVRARLLARGGRAAICGKYLFNWAVRTKLKLTPIAAAGQLDLSGWFTAGYSGGDIYHSVSHARPRWIWFCLLLLAAGVGIYLLPNR.

Ser-2 carries the N-acetylserine; by host modification. An interaction with STAT1 region spans residues 2–23 (STNPKPQKKNKRNTNRRPQDVK). The interval 2-58 (STNPKPQKKNKRNTNRRPQDVKFPGGGQIVGGVYLLPRRGPRLGVRATRKTSERSQP) is interaction with EIF2AK2/PKR. The interval 2–59 (STNPKPQKKNKRNTNRRPQDVKFPGGGQIVGGVYLLPRRGPRLGVRATRKTSERSQPR) is interaction with DDX3X. A disordered region spans residues 2-75 (STNPKPQKKN…PKARRPEGRT (74 aa)). Over 2-168 (STNPKPQKKN…EDGVNYATGN (167 aa)) the chain is Cytoplasmic. Short sequence motifs (nuclear localization signal) lie at residues 5-13 (PKPQKKNKR) and 38-43 (PRRGPR). The span at 7 to 16 (PQKKNKRNTN) shows a compositional bias: basic residues. The span at 32–47 (GGVYLLPRRGPRLGVR) shows a compositional bias: low complexity. A Phosphoserine; by host modification is found at Ser-53. Short sequence motifs (nuclear localization signal) lie at residues 58–64 (PRGRRQP) and 66–71 (PKARRP). Over residues 58–68 (PRGRRQPIPKA) the composition is skewed to basic residues. Position 99 is a phosphoserine; by host (Ser-99). Residues 112–152 (PRRRSRNLGKVIDTLTCGFADLMGYIPLVGAPLGGAARALA) form an important for endoplasmic reticulum and mitochondrial localization region. Residue Ser-116 is modified to Phosphoserine; by host PKA. The segment at 122–173 (VIDTLTCGFADLMGYIPLVGAPLGGAARALAHGVRVLEDGVNYATGNLPGCS) is interaction with APOA2. The tract at residues 164-167 (YATG) is important for lipid droplets localization. The helical transmembrane segment at 169–189 (LPGCSFSIFLLALLSCLTVPA) threads the bilayer. The propeptide at 178–191 (LLALLSCLTVPASA) is ER anchor for the core protein, removed in mature form by host signal peptidase. The Lumenal segment spans residues 190–358 (SAYQVRNSTG…AGAHWGVLAG (169 aa)). Asn-196, Asn-209, and Asn-234 each carry an N-linked (GlcNAc...) asparagine; by host glycan. The important for fusion stretch occupies residues 265-296 (LVGSATLCSALYVGDLCGSVFLVGQLFTFSPR). A glycan (N-linked (GlcNAc...) asparagine; by host) is linked at Asn-305. A helical transmembrane segment spans residues 359–379 (IAYFSMVGNWAKVLVVLLLFA). Over 380-725 (GVDAETHVTG…WEYVVLLFLL (346 aa)) the chain is Lumenal. Residues 385–411 (THVTGGSAGHTVSGFVSLLAPGAKQNV) form an HVR1 region. Asn-417, Asn-423, Asn-430, and Asn-448 each carry an N-linked (GlcNAc...) (high mannose) asparagine; by host glycan. Disulfide bonds link Cys-429/Cys-552, Cys-452/Cys-459, Cys-486/Cys-494, and Cys-503/Cys-508. The interval 474 to 480 (YANGSGP) is HVR2. N-linked (GlcNAc...) asparagine; by host glycosylation occurs at Asn-476. Positions 481-493 (DQRPYCWHYPPKP) are CD81-binding 1. N-linked (GlcNAc...) (high mannose) asparagine; by host glycosylation is present at Asn-532. The tract at residues 543–551 (RPPLGNWFG) is CD81-binding 2. The N-linked (GlcNAc...) (high mannose) asparagine; by host glycan is linked to Asn-556. A disulfide bridge connects residues Cys-564 and Cys-569. Asn-576 carries N-linked (GlcNAc...) (high mannose) asparagine; by host glycosylation. Disulfide bonds link Cys-581-Cys-585, Cys-597-Cys-620, and Cys-607-Cys-644. Asn-623 and Asn-645 each carry an N-linked (GlcNAc...) (high mannose) asparagine; by host glycan. A disulfide bridge connects residues Cys-652 and Cys-677. Residues 660-671 (SELSPLLLTTTQ) form an EIF2AK2/eIF2-alpha phosphorylation homology domain (PePHD) region. Residues 726-746 (LADARVCSCLWMMLLISQAEA) traverse the membrane as a helical segment. At 747–757 (ALENLVILNAA) the chain is on the lumenal side. The chain crosses the membrane as a helical span at residues 758 to 778 (SLAGTHGLVSFLVFFCFAWYL). Residues 779–781 (KGK) are Cytoplasmic-facing. The chain crosses the membrane as a helical span at residues 782–803 (WVPGAVYTFYGMWPLLLLLLAL). At 804 to 813 (PQRAYALDTE) the chain is on the lumenal side. A helical membrane pass occupies residues 814–834 (VAASCGGVVLVGLMALTLSPY). Over 835–838 (YKRY) the chain is Cytoplasmic. A helical transmembrane segment spans residues 839-859 (ISWCLWWLQYFLTRVEAQLHV). Residues 860-881 (WIPPLNVRGGRDAVILLMCAVH) are Lumenal-facing. Residues 882–902 (PTLVFDITKLLLAVFGPLWIL) traverse the membrane as a helical segment. The Peptidase C18 domain occupies 899-1026 (LWILQASLLK…GMVSKGWRLL (128 aa)). Residues 903-1657 (QASLLKVPYF…CMSADLEVVT (755 aa)) lie on the Cytoplasmic side of the membrane. Residues 904-1206 (ASLLKVPYFV…PVENLETTMR (303 aa)) are protease NS2-3. A lipid anchor (S-palmitoyl cysteine; by host) is attached at Cys-922. Residues 929–949 (IGGHYVQMVIIKLGALTGTYV) form an interaction with host SCPS1 region. Catalysis depends on for protease NS2 activity; shared with dimeric partner residues His-952, Glu-972, and Cys-993. Positions 1027–1208 (APITAYAQQT…ENLETTMRSP (182 aa)) constitute a Peptidase S29 domain. Catalysis depends on charge relay system; for serine protease NS3 activity residues His-1083 and Asp-1107. Zn(2+)-binding residues include Cys-1123 and Cys-1125. Ser-1165 serves as the catalytic Charge relay system; for serine protease NS3 activity. Zn(2+) contacts are provided by Cys-1171 and His-1175. One can recognise a Helicase ATP-binding domain in the interval 1217-1369 (PVVPQSFQVA…PNIEEVALST (153 aa)). Residue 1230-1237 (APTGSGKS) participates in ATP binding. Positions 1237 and 1317 each coordinate Mg(2+). The short motif at 1316-1319 (DECH) is the DECH box element. The segment at 1486–1497 (QRRGRTGRGKPG) is RNA-binding. A helical membrane pass occupies residues 1658–1678 (STWVLVGGVLAALAAYCLSTG). The interval 1679–1690 (CVVIVGRVVLSG) is NS3-binding. Over 1679 to 1805 (CVVIVGRVVL…AVTSPLTTSQ (127 aa)) the chain is Cytoplasmic. A helical transmembrane segment spans residues 1806 to 1826 (TLLFNILGGWVAAQLAAPGAA). The Lumenal segment spans residues 1827–1828 (TA). A helical membrane pass occupies residues 1829-1849 (FVGAGLAGAAIGSVGLGKVLI). Positions 1833-1861 (GLAGAAIGSVGLGKVLIDILAGYGAGVAG) are glycine zipper. A topological domain (cytoplasmic) is located at residue Asp-1850. Residues 1851–1871 (ILAGYGAGVAGALVAFKIMSG) traverse the membrane as a helical segment. Topologically, residues 1872–1881 (EVPSTEDLVN) are lumenal. The helical transmembrane segment at 1882–1902 (LLPAILSPGALVVGVVCAAIL) threads the bilayer. Residues 1903–1972 (RRHVGPGEGA…WISSECTTPC (70 aa)) lie on the Cytoplasmic side of the membrane. S-palmitoyl cysteine; by host attachment occurs at residues Cys-1968 and Cys-1972. An intramembrane segment occupies 1973-2003 (SGSWLRDIWDWICEVLSDFKTWLKAKLMPQL). A membrane-binding region spans residues 1978-1998 (RDIWDWICEVLSDFKTWLKAK). At 2004–2990 (PGIPFVSCQR…YHSVSHARPR (987 aa)) the chain is on the cytoplasmic side. The segment at 2005–2221 (GIPFVSCQRG…KATCTANHDS (217 aa)) is RNA-binding. Cys-2011, Cys-2029, Cys-2031, and Cys-2052 together coordinate Zn(2+). The tract at residues 2120-2208 (EFFTELDGVR…ASSSASQLSA (89 aa)) is FKBP8-binding. Positions 2120 to 2332 (EFFTELDGVR…PVPPPRKKRT (213 aa)) are transcriptional activation. The tract at residues 2135–2139 (PPCKP) is interaction with non-structural protein 4A. Residues 2189-2441 (RLARGSPPSV…TPCAAEEQKL (253 aa)) are interaction with host SKP2. Ser-2194 bears the Phosphoserine; by host; in p56 mark. 5 positions are modified to phosphoserine; by host; in p58: Ser-2197, Ser-2201, Ser-2204, Ser-2207, and Ser-2210. An ISDR region spans residues 2206–2245 (LSAPSLKATCTANHDSPDAELIEANLLWRQEMGGNITRVE). An EIF2AK2/PKR-binding region spans residues 2210 to 2275 (SLKATCTANH…REISVPAEIL (66 aa)). Positions 2249–2306 (KVVILDSFDPLVAEEDEREISVPAEILRKSRRFAQALPVWARPDYNPPLVETWKKPDY) are NS4B-binding. Disordered regions lie at residues 2312-2334 (HGCP…RTVV) and 2351-2408 (SFGS…WSTV). Positions 2315-2326 (PLPPPKSPPVPP) are enriched in pro residues. Phosphoserine; by host is present on Ser-2321. Residues 2322 to 2325 (PPVP) carry the SH3-binding motif. The Nuclear localization signal motif lies at 2326–2334 (PPRKKRTVV). The interval 2332–2441 (TVVLTESTLS…TPCAAEEQKL (110 aa)) is interaction with host IFI27. Over residues 2351 to 2369 (SFGSSSTSGITGDNTTTSS) the composition is skewed to low complexity. Residues 2354-2377 (SSSTSGITGDNTTTSSEPAPSGCP) are V3. A phosphoserine; by host mark is found at Ser-2449 and Ser-2462. In terms of domain architecture, RdRp catalytic spans 2634–2752 (PMGFSYDTRC…ICESAGVQED (119 aa)). Mg(2+) contacts are provided by Asp-2640, Asp-2738, and Asp-2739. A helical transmembrane segment spans residues 2991–3011 (WIWFCLLLLAAGVGIYLLPNR).

It belongs to the hepacivirus polyprotein family. Homooligomer. Interacts with E1 (via C-terminus). Interacts with the non-structural protein 5A. Interacts (via N-terminus) with host STAT1 (via SH2 domain); this interaction results in decreased STAT1 phosphorylation and ubiquitin-mediated proteasome-dependent STAT1 degradation, leading to decreased IFN-stimulated gene transcription. Interacts with host STAT3; this interaction constitutively activates STAT3. Interacts with host LTBR receptor. Interacts with host TNFRSF1A receptor and possibly induces apoptosis. Interacts with host HNRPK. Interacts with host YWHAE. Interacts with host UBE3A/E6AP. Interacts with host DDX3X. Interacts with host APOA2. Interacts with host RXRA protein. Interacts with host SP110 isoform 3/Sp110b; this interaction sequesters the transcriptional corepressor SP110 away from the nucleus. Interacts with host CREB3 nuclear transcription protein; this interaction triggers cell transformation. Interacts with host ACY3. Interacts with host C1QR1. Interacts with host RBM24; this interaction, which enhances the interaction of the mature core protein with 5'-UTR, may inhibit viral translation and favor replication. Interacts with host EIF2AK2/PKR; this interaction induces the autophosphorylation of EIF2AK2. Part of the viral assembly initiation complex composed of NS2, E1, E2, NS3, NS4A, NS5A and the mature core protein. In terms of assembly, forms a heterodimer with envelope glycoprotein E2. Interacts with mature core protein. Interacts with protease NS2. The heterodimer E1/E2 interacts with host CLDN1; this interaction plays a role in viral entry into host cell. Interacts with host SPSB2 (via C-terminus). Part of the viral assembly initiation complex composed of NS2, E1, E2, NS3, NS4A, NS5A and the mature core protein. Interacts with host NEURL3; this interaction prevents E1 binding to glycoprotein E2. As to quaternary structure, forms a heterodimer with envelope glycoprotein E1. Interacts with host CD81 and SCARB1 receptors; these interactions play a role in viral entry into host cell. Interacts with host EIF2AK2/PKR; this interaction inhibits EIF2AK2 and probably allows the virus to evade the innate immune response. Interacts with host CD209/DC-SIGN and CLEC4M/DC-SIGNR. Interact with host SPCS1; this interaction is essential for viral particle assembly. Interacts with protease NS2. The heterodimer E1/E2 interacts with host CLDN1; this interaction plays a role in viral entry into host cell. Part of the viral assembly initiation complex composed of NS2, E1, E2, NS3, NS4A, NS5A and the mature core protein. Interacts with host SLC3A2/4F2hc; the interaction may facilitate viral entry into host cell. Interacts with human PLSCR1. Homohexamer. Homoheptamer. Interacts with protease NS2. In terms of assembly, homodimer. Interacts with host SPCS1; this interaction is essential for viral particle assembly. Interacts with envelope glycoprotein E1. Interacts with envelope glycoprotein E2. Interacts with viroporin p7. Interacts with serine protease/helicase NS3. Part of the replication complex composed of NS2, NS3, NS4A, NS4B, NS5A and the RNA-directed RNA polymerase embedded in an ER-derived membranous web. Part of the viral assembly initiation complex composed of NS2, E1, E2, NS3, NS4A, NS5A and the mature core protein. As to quaternary structure, interacts with protease NS2. Interacts with non-structural protein 4A; this interaction stabilizes the folding of NS3 serine protease. NS3-NS4A interaction is essential for NS3 activation and allows membrane anchorage of the latter. NS3/NS4A complex also prevents phosphorylation of host IRF3, thus preventing the establishment of dsRNA induced antiviral state. Interacts with host MAVS; this interaction leads to the cleavage and inhibition of host MAVS. Interacts with host TICAM1; this interaction leads to the cleavage and inhibition of host TICAM1. Interacts with host TANK-binding kinase/TBK1; this interaction results in the inhibition of the association between TBK1 and IRF3, which leads to the inhibition of IRF3 activation. Interacts with host RBM24. Part of the replication complex composed of NS2, NS3, NS4A, NS4B, NS5A and the RNA-directed RNA polymerase embedded in an ER-derived membranous web. Part of the viral assembly initiation complex composed of NS2, E1, E2, NS3, NS4A, NS5A and the mature core protein. Interacts with NS3 serine protease; this interaction stabilizes the folding of NS3 serine protease. NS3-NS4A interaction is essential for NS3 activation and allows membrane anchorage of the latter. Interacts with non-structural protein 5A (via N-terminus). Part of the replication complex composed of NS2, NS3, NS4A, NS4B, NS5A and the RNA-directed RNA polymerase embedded in an ER-derived membranous web. Part of the viral assembly initiation complex composed of NS2, E1, E2, NS3, NS4A, NS5A and the mature core protein. In terms of assembly, homomultimer. Interacts with non-structural protein NS5A. Interacts with host PLA2G4C; this interaction likely initiates the recruitment of replication complexes to lipid droplets. Interacts with host STING; this interaction disrupts the interaction between STING and TBK1 thereby suppressing the interferon signaling. Part of the replication complex composed of NS2, NS3, NS4A, NS4B, NS5A and the RNA-directed RNA polymerase embedded in an ER-derived membranous web. As to quaternary structure, monomer. Homodimer; dimerization is required for RNA-binding. Interacts with mature core protein. Interacts (via N-terminus) with non-structural protein 4A. Interacts with non-structural protein 4B. Interacts with RNA-directed RNA polymerase. Part of the viral assembly initiation complex composed of NS2, E1, E2, NS3, NS4A, NS5A and the mature core protein. Part of the replication complex composed of NS2, NS3, NS4A, NS4B, NS5A and the RNA-directed RNA polymerase. Interacts with host GRB2. Interacts with host BIN1. Interacts with host PIK3R1. Interacts with host SRCAP. Interacts with host FKBP8. Interacts with host VAPB. Interacts with host EIF2AK2/PKR; this interaction leads to disruption of EIF2AK2 dimerization by NS5A and probably allows the virus to evade the innate immune response. Interacts (via N-terminus) with host PACSIN2 (via N-terminus); this interaction attenuates protein kinase C alpha-mediated phosphorylation of PACSIN2 by disrupting the interaction between PACSIN2 and PRKCA. Interacts (via N-terminus) with host SRC kinase (via SH2 domain). Interacts with most Src-family kinases. Interacts with host IFI27 and SKP2; promotes the ubiquitin-mediated proteasomal degradation of NS5A. Interacts with host GPS2. Interacts with host TNFRSF21; this interaction allows the modulation by the virus of JNK, p38 MAPK, STAT3, and Akt signaling pathways in a DR6-dependent manner. Interacts (via N-terminus) with host CIDEB (via N-terminus); this interaction seems to regulate the association of HCV particles with APOE. Interacts with host CHKA/Choline Kinase-alpha; CHKA bridges host PI4KA and NS5A and potentiates NS5A-stimulated PI4KA activity, which then facilitates the targeting of the ternary complex to the ER for viral replication. Interacts with host SPSB2 (via C-terminus); this interaction targets NS5A for ubiquitination and degradation. Interacts with host RAB18; this interaction may promote the association of NS5A and other replicase components with lipid droplets. Interacts with host TRIM14; this interaction induces the degradation of NS5A. Homooligomer. Interacts with non-structural protein 5A. Interacts with host VAPB. Interacts with host PRK2/PKN2. Interacts with host HNRNPA1 and SEPT6; these interactions facilitate viral replication. Part of the replication complex composed of NS2, NS3, NS4A, NS4B, NS5A and the RNA-directed RNA polymerase. Initiates RNA transcription/replication at a flavin adenine dinucleotide (FAD), resulting in a 5'- FAD cap on viral RNAs. In this way, recognition of viral 5' RNA by host pattern recognition receptors can be bypassed, thereby evading activation of antiviral pathways. Zn(2+) is required as a cofactor. It depends on Mg(2+) as a cofactor. Post-translationally, specific enzymatic cleavages in vivo yield mature proteins. The structural proteins, core, E1, E2 and p7 are produced by proteolytic processing by host signal peptidases. The core protein precursor is synthesized as a 23 kDa protein which is retained in the ER membrane through the hydrophobic signal peptide. Cleavage by the signal peptidase releases the 21 kDa mature core protein. The cleavage of the core protein precursor occurs between aminoacids 176 and 188 but the exact cleavage site is not known. Some degraded forms of the core protein appear as well during the course of infection. The other proteins (p7, NS2, NS3, NS4A, NS4B, NS5A and NS5B) are cleaved by the viral proteases. Autoprocessing between NS2 and NS3 is mediated by the NS2 cysteine protease catalytic domain and regulated by the NS3 N-terminal domain. In terms of processing, phosphorylated by host PKC and PKA. Ubiquitinated; mediated by UBE3A and leading to core protein subsequent proteasomal degradation. Post-translationally, highly N-glycosylated. In terms of processing, palmitoylation is required for NS2/3 autoprocessing and E2 recruitment to membranes. Palmitoylated. This modification may play a role in its polymerization or in protein-protein interactions. Post-translationally, cleaved by host caspases which are probably activated by the viral infection. In terms of processing, ubiquitinated. Ubiquitination, most probably at Lys-2350, mediated by host IFI27 and SKP2 leads to proteasomal degradation, restricting viral infection. Phosphorylated on serines in a basal form termed p56. p58 is a hyperphosphorylated form of p56. p56 and p58 coexist in the cell in roughly equivalent amounts. Hyperphosphorylation is dependent on the presence of NS4A. Host CSNK1A1/CKI-alpha or RPS6KB1 kinases may be responsible for NS5A phosphorylation. Phosphorylated NS5A is involved in viral replication. Post-translationally, tyrosine phosphorylation is essential for the interaction with host SRC. In terms of processing, the N-terminus is phosphorylated by host PRK2/PKN2.

The protein resides in the host endoplasmic reticulum membrane. It localises to the host mitochondrion membrane. The protein localises to the virion. Its subcellular location is the host cytoplasm. It is found in the host nucleus. The protein resides in the host lipid droplet. It localises to the virion membrane. The protein localises to the host mitochondrion. Its subcellular location is the host cell membrane. It is found in the host perinuclear region. The enzyme catalyses Hydrolysis of four peptide bonds in the viral precursor polyprotein, commonly with Asp or Glu in the P6 position, Cys or Thr in P1 and Ser or Ala in P1'.. It catalyses the reaction a ribonucleoside 5'-triphosphate + H2O = a ribonucleoside 5'-diphosphate + phosphate + H(+). It carries out the reaction ATP + H2O = ADP + phosphate + H(+). The catalysed reaction is RNA(n) + a ribonucleoside 5'-triphosphate = RNA(n+1) + diphosphate. Inhibited by the antiviral drug hexamethylene amiloride. Inhibition by amantadine appears to be genotype-dependent. Also inhibited by long-alkyl-chain iminosugar derivatives. With respect to regulation, activity is up-regulated by PRK2/PKN2-mediated phosphorylation. Functionally, packages viral RNA to form a viral nucleocapsid, and promotes virion budding. Participates in the viral particle production as a result of its interaction with the non-structural protein 5A. Binds RNA and may function as a RNA chaperone to induce the RNA structural rearrangements taking place during virus replication. Modulates viral translation initiation by interacting with viral IRES and 40S ribosomal subunit. Affects various cell signaling pathways, host immunity and lipid metabolism. Prevents the establishment of cellular antiviral state by blocking the interferon-alpha/beta (IFN-alpha/beta) and IFN-gamma signaling pathways and by blocking the formation of phosphorylated STAT1 and promoting ubiquitin-mediated proteasome-dependent degradation of STAT1. Activates STAT3 leading to cellular transformation. Regulates the activity of cellular genes, including c-myc and c-fos. May repress the promoter of p53, and sequester CREB3 and SP110 isoform 3/Sp110b in the cytoplasm. Represses cell cycle negative regulating factor CDKN1A, thereby interrupting an important check point of normal cell cycle regulation. Targets transcription factors involved in the regulation of inflammatory responses and in the immune response: suppresses TNF-induced NF-kappa-B activation, and activates AP-1. Binds to dendritic cells (DCs) via C1QR1, resulting in down-regulation of T-lymphocytes proliferation. Alters lipid metabolism by interacting with hepatocellular proteins involved in lipid accumulation and storage. Induces up-regulation of FAS promoter activity, and thereby contributes to the increased triglyceride accumulation in hepatocytes (steatosis). In terms of biological role, forms a heterodimer with envelope glycoprotein E2, which mediates virus attachment to the host cell, virion internalization through clathrin-dependent endocytosis and fusion with host membrane. Fusion with the host cell is most likely mediated by both E1 and E2, through conformational rearrangements of the heterodimer required for fusion rather than a classical class II fusion mechanism. E1/E2 heterodimer binds host apolipoproteins such as APOB and APOE thereby forming a lipo-viro-particle (LVP). APOE associated to the LVP allows the initial virus attachment to cell surface receptors such as the heparan sulfate proteoglycans (HSPGs), syndecan-1 (SDC1), syndecan-1 (SDC2), the low-density lipoprotein receptor (LDLR) and scavenger receptor class B type I (SCARB1). The cholesterol transfer activity of SCARB1 allows E2 exposure and binding of E2 to SCARB1 and the tetraspanin CD81. E1/E2 heterodimer binding on CD81 activates the epithelial growth factor receptor (EGFR) signaling pathway. Diffusion of the complex E1-E2-EGFR-SCARB1-CD81 to the cell lateral membrane allows further interaction with Claudin 1 (CLDN1) and occludin (OCLN) to finally trigger HCV entry. Its function is as follows. Forms a heterodimer with envelope glycoprotein E1, which mediates virus attachment to the host cell, virion internalization through clathrin-dependent endocytosis and fusion with host membrane. Fusion with the host cell is most likely mediated by both E1 and E2, through conformational rearrangements of the heterodimer required for fusion rather than a classical class II fusion mechanism. The interaction between envelope glycoprotein E2 and host apolipoprotein E/APOE allows the proper assembly, maturation and infectivity of the viral particles. This interaction is probably promoted via the up-regulation of cellular autophagy by the virus. E1/E2 heterodimer binds host apolipoproteins such as APOB and APOE thereby forming a lipo-viro-particle (LVP). APOE associated to the LVP allows the initial virus attachment to cell surface receptors such as the heparan sulfate proteoglycans (HSPGs), syndecan-1 (SDC1), syndecan-1 (SDC2), the low-density lipoprotein receptor (LDLR) and scavenger receptor class B type I (SCARB1). The cholesterol transfer activity of SCARB1 allows E2 exposure and binding of E2 to SCARB1 and the tetraspanin CD81. E1/E2 heterodimer binding on CD81 activates the epithelial growth factor receptor (EGFR) signaling pathway. Diffusion of the complex E1-E2-EGFR-SCARB1-CD81 to the cell lateral membrane allows further interaction with Claudin 1 (CLDN1) and occludin (OCLN) to finally trigger HCV entry. Inhibits host EIF2AK2/PKR activation, preventing the establishment of an antiviral state. Viral ligand for CD209/DC-SIGN and CLEC4M/DC-SIGNR, which are respectively found on dendritic cells (DCs), and on liver sinusoidal endothelial cells and macrophage-like cells of lymph node sinuses. These interactions allow the capture of circulating HCV particles by these cells and subsequent facilitated transmission to permissive cells such as hepatocytes and lymphocyte subpopulations. The interaction between E2 and host amino acid transporter complex formed by SLC3A2 and SLC7A5/LAT1 may facilitate viral entry into host cell. Ion channel protein that acts as a viroporin and plays an essential role in the assembly, envelopment and secretion of viral particles. Regulates the host cell secretory pathway, which induces the intracellular retention of viral glycoproteins and favors assembly of viral particles. Creates a pore in acidic organelles and releases Ca(2+) and H(+) in the cytoplasm of infected cells, leading to a productive viral infection. High levels of cytoplasmic Ca(2+) may trigger membrane trafficking and transport of viral ER-associated proteins to viroplasms, sites of viral genome replication. This ionic imbalance induces the assembly of the inflammasome complex, which triggers the maturation of pro-IL-1beta into IL-1beta through the action of caspase-1. Targets also host mitochondria and induces mitochondrial depolarization. In addition of its role as a viroporin, acts as a lipid raft adhesion factor. Functionally, cysteine protease required for the proteolytic auto-cleavage between the non-structural proteins NS2 and NS3. The N-terminus of NS3 is required for the function of NS2 protease (active region NS2-3). Promotes the initiation of viral particle assembly by mediating the interaction between structural and non-structural proteins. In terms of biological role, displays three enzymatic activities: serine protease with a chymotrypsin-like fold, NTPase and RNA helicase. NS3 serine protease, in association with NS4A, is responsible for the cleavages of NS3-NS4A, NS4A-NS4B, NS4B-NS5A and NS5A-NS5B. The NS3/NS4A complex prevents phosphorylation of host IRF3, thus preventing the establishment of dsRNA induced antiviral state. The NS3/NS4A complex induces host amino acid transporter component SLC3A2, thus contributing to HCV propagation. NS3 RNA helicase binds to RNA and unwinds both dsDNA and dsRNA in the 3' to 5' direction, and likely resolves RNA complicated stable secondary structures in the template strand. Binds a single ATP and catalyzes the unzipping of a single base pair of dsRNA. Inhibits host antiviral proteins TBK1 and IRF3 thereby preventing the establishment of an antiviral state. Cleaves host MAVS/CARDIF thereby preventing the establishment of an antiviral state. Cleaves host TICAM1/TRIF, thereby disrupting TLR3 signaling and preventing the establishment of an antiviral state. Its function is as follows. The NS3/NS4A complex prevents phosphorylation of host IRF3, thus preventing the establishment of dsRNA induced antiviral state. The NS3/NS4A complex induces host amino acid transporter component SLC3A2, thus contributing to HCV propagation. Induces a specific membrane alteration that serves as a scaffold for the virus replication complex. This membrane alteration gives rise to the so-called ER-derived membranous web that contains the replication complex. NS4B self-interaction contributes to its function in membranous web formation. Promotes host TRIF protein degradation in a CASP8-dependent manner thereby inhibiting host TLR3-mediated interferon signaling. Disrupts the interaction between STING and TBK1 contributing to the inhibition of interferon signaling. Functionally, phosphorylated protein that is indispensable for viral replication and assembly. Both hypo- and hyperphosphorylated states are required for the viral life cycle. The hyperphosphorylated form of NS5A is an inhibitor of viral replication. Involved in RNA-binding and especially in binding to the viral genome. Zinc is essential for RNA-binding. Participates in the viral particle production as a result of its interaction with the mature viral core protein. Its interaction with host VAPB may target the viral replication complex to vesicles. Down-regulates viral IRES translation initiation. Mediates interferon resistance, presumably by interacting with and inhibiting host EIF2AK2/PKR. Prevents BIN1-induced apoptosis. Acts as a transcriptional activator of some host genes important for viral replication when localized in the nucleus. Via the interaction with host PACSIN2, modulates lipid droplet formation in order to promote virion assembly. Modulates TNFRSF21/DR6 signaling pathway for viral propagation. In terms of biological role, RNA-dependent RNA polymerase that performs primer-template recognition and RNA synthesis during viral replication. Initiates RNA transcription/replication at a flavin adenine dinucleotide (FAD), resulting in a 5'- FAD cap on viral RNAs. In this way, recognition of viral 5' RNA by host pattern recognition receptors can be bypassed, thereby evading activation of antiviral pathways. The protein is Genome polyprotein of Homo sapiens (Human).